A 101-amino-acid chain; its full sequence is MEIKHPATAGTLESSDIQITLSPATSGVAIQLQSSVEKQFGHQIRSVIEATLAKLGIENVAVDANDKGALDCTIKARTIAAVYRASDNKTFDWEEINAWIN.

Residue S14 is modified to O-(phosphoribosyl dephospho-coenzyme A)serine.

This sequence belongs to the CitD family. In terms of assembly, oligomer with a subunit composition of (alpha,beta,gamma)6.

It localises to the cytoplasm. Functionally, covalent carrier of the coenzyme of citrate lyase. The sequence is that of Citrate lyase acyl carrier protein from Lacticaseibacillus casei (strain BL23) (Lactobacillus casei).